We begin with the raw amino-acid sequence, 275 residues long: MKENMLDILKNLNFTEYESKAYLALLQESPLTGYAVAKKSGVPRSKIYEVLESLVIRGDVFVSHGNTPQYVPVPAKELIKNRRLKAEEHFDQAEKYFEKFEQTANDRENIWNITGRSEILEKVKACILSAKKRILLEIWKEDFKEIEAELKQAAEQGVIVTIIAYGDIVSDFANVYLHDMSSEITEEYDGRWLVYSGDDSEVVAGIVSLGNDSRAAWTMHVGLVMPITEVIIHDLYLMEILKKHRELLEESFGKNLIQLRRKFSIHSDFKKHYLE.

A coiled-coil region spans residues 75–157; that stretch reads AKELIKNRRL…AELKQAAEQG (83 aa).

This is an uncharacterized protein from Bacillus subtilis (strain 168).